The primary structure comprises 452 residues: Glycine receptor subunit alpha-2 (452 aa).

An N-terminal signal peptide occupies residues 1–27 (MYRQLVNILTALFAFFLGTNHFREAFC). The Extracellular portion of the chain corresponds to 28-256 (KDHDSRSGKH…KFHLERQMGY (229 aa)). N-linked (GlcNAc...) asparagine glycosylation occurs at Asn72. Glycine is bound at residue Arg99. Position 99 (Arg99) interacts with strychnine. N-linked (GlcNAc...) asparagine glycosylation occurs at Asn103. Glycine is bound at residue Ser163. A disulfide bridge links Cys172 with Cys186. The Zn(2+) site is built by Glu226 and Glu228. Cys232 and Cys243 are disulfide-bonded. Thr238 is a binding site for glycine. His249 is a Zn(2+) binding site. A helical transmembrane segment spans residues 257–278 (YLIQMYIPSLLIVILSWVSFWI). The Cytoplasmic portion of the chain corresponds to 279 to 283 (NMDAA). Residues 284–304 (PARVALGITTVLTMTTQSSGS) form a helical membrane-spanning segment. The Extracellular portion of the chain corresponds to 305 to 315 (RASLPKVSYVK). Residues 316-336 (AIDIWMAVCLLFVFAALLEYA) form a helical membrane-spanning segment. Over 337–420 (AVNFVSRQHK…FVDRAKRIDT (84 aa)) the chain is Cytoplasmic. A helical membrane pass occupies residues 421–441 (ISRAAFPLAFLIFNIFYWITY). The Extracellular portion of the chain corresponds to 442 to 452 (KIIRHEDVHKK).

This sequence belongs to the ligand-gated ion channel (TC 1.A.9) family. Glycine receptor (TC 1.A.9.3) subfamily. GLRA2 sub-subfamily. As to quaternary structure, interacts with GLRB. Heteropentamer composed of GLRA2 and GLRB; functional GLRB-GLRA2 heteropentamers contain four GLRA2 subunits and one GLRB subunit, although alternative subunit composition cannot be excluded. Homopentamer (in vitro). Both homopentamers and heteropentamers form functional ion channels, but their characteristics are subtly different. Detected in the retina inner plexiform layer (at protein level). Detected in neonate retina. Detected in brain. Detected in spinal cord, with higher levels in the dorsal horn.

The protein resides in the postsynaptic cell membrane. It is found in the synapse. It localises to the cell membrane. Its subcellular location is the cell projection. The catalysed reaction is chloride(in) = chloride(out). With respect to regulation, channel opening is triggered by extracellular glycine. Channel opening is also triggered by taurine and beta-alanine. Inhibited by strychnine. Inhibited by picrotoxin. In terms of biological role, subunit of heteromeric glycine-gated chloride channels. Plays a role in synaptic plasticity. Contributes to the generation of inhibitory postsynaptic currents, and is involved in the down-regulation of neuronal excitability. Plays a role in cellular responses to ethanol. This Mus musculus (Mouse) protein is Glycine receptor subunit alpha-2.